Consider the following 460-residue polypeptide: Bifunctional protein GlmU (460 aa).

The interval 1 to 229 (MTNYAIILAA…FNESLGVNDR (229 aa)) is pyrophosphorylase. UDP-N-acetyl-alpha-D-glucosamine contacts are provided by residues 8-11 (LAAG), Lys22, Gln72, and 77-78 (GT). Mg(2+) is bound at residue Asp102. Residues Gly139, Glu154, Asn169, and Asn227 each contribute to the UDP-N-acetyl-alpha-D-glucosamine site. Asn227 lines the Mg(2+) pocket. A linker region spans residues 230-250 (VALATAETVMRQRITQKHMVN). Residues 251 to 460 (GVTFQNPETV…RLAHHPSRSK (210 aa)) are N-acetyltransferase. Residues Arg332 and Lys350 each contribute to the UDP-N-acetyl-alpha-D-glucosamine site. Residue His362 is the Proton acceptor of the active site. The UDP-N-acetyl-alpha-D-glucosamine site is built by Tyr365 and Asn376. Acetyl-CoA is bound by residues Ala379, 385-386 (NY), Ser404, Ala422, and Arg439.

This sequence in the N-terminal section; belongs to the N-acetylglucosamine-1-phosphate uridyltransferase family. The protein in the C-terminal section; belongs to the transferase hexapeptide repeat family. As to quaternary structure, homotrimer. It depends on Mg(2+) as a cofactor.

The protein resides in the cytoplasm. The enzyme catalyses alpha-D-glucosamine 1-phosphate + acetyl-CoA = N-acetyl-alpha-D-glucosamine 1-phosphate + CoA + H(+). The catalysed reaction is N-acetyl-alpha-D-glucosamine 1-phosphate + UTP + H(+) = UDP-N-acetyl-alpha-D-glucosamine + diphosphate. Its pathway is nucleotide-sugar biosynthesis; UDP-N-acetyl-alpha-D-glucosamine biosynthesis; N-acetyl-alpha-D-glucosamine 1-phosphate from alpha-D-glucosamine 6-phosphate (route II): step 2/2. It participates in nucleotide-sugar biosynthesis; UDP-N-acetyl-alpha-D-glucosamine biosynthesis; UDP-N-acetyl-alpha-D-glucosamine from N-acetyl-alpha-D-glucosamine 1-phosphate: step 1/1. It functions in the pathway bacterial outer membrane biogenesis; LPS lipid A biosynthesis. Catalyzes the last two sequential reactions in the de novo biosynthetic pathway for UDP-N-acetylglucosamine (UDP-GlcNAc). The C-terminal domain catalyzes the transfer of acetyl group from acetyl coenzyme A to glucosamine-1-phosphate (GlcN-1-P) to produce N-acetylglucosamine-1-phosphate (GlcNAc-1-P), which is converted into UDP-GlcNAc by the transfer of uridine 5-monophosphate (from uridine 5-triphosphate), a reaction catalyzed by the N-terminal domain. This is Bifunctional protein GlmU from Streptococcus pyogenes serotype M6 (strain ATCC BAA-946 / MGAS10394).